The chain runs to 73 residues: uncharacterized protein (73 aa).

This is an uncharacterized protein from Haemophilus influenzae (strain ATCC 51907 / DSM 11121 / KW20 / Rd).